The primary structure comprises 359 residues: Aromatic amino acid aminotransferase (359 aa).

N6-(pyridoxal phosphate)lysine is present on Lys-223.

Belongs to the class-II pyridoxal-phosphate-dependent aminotransferase family. In terms of assembly, homodimer. Requires pyridoxal 5'-phosphate as cofactor.

It carries out the reaction an aromatic L-alpha-amino acid + 2-oxoglutarate = an aromatic oxo-acid + L-glutamate. In terms of biological role, aminotransferase that catalyzes the conversion of aromatic amino acids and 2-oxoglutarate into corresponding aromatic oxo acids and L-glutamate. The protein is Aromatic amino acid aminotransferase of Streptomyces avermitilis (strain ATCC 31267 / DSM 46492 / JCM 5070 / NBRC 14893 / NCIMB 12804 / NRRL 8165 / MA-4680).